The following is a 716-amino-acid chain: Segment polarity protein dishevelled homolog DVL-3 (716 aa).

Positions 1 to 82 (MGETKIIYHL…RVVSWLVSAE (82 aa)) constitute a DIX domain. Position 27 is an omega-N-methylarginine (Arg27). 2 positions are modified to phosphoserine: Ser48 and Ser125. The tract at residues 85–235 (HPDPAPFCAD…VSRIERSSSF (151 aa)) is disordered. Positions 142 to 156 (QRERPRRRDGPEHAT) are enriched in basic and acidic residues. Positions 175–190 (SSSTLMSSELETTSFF) are enriched in low complexity. Ser192 bears the Phosphoserine mark. A compositionally biased stretch (low complexity) spans 199-212 (SRFSSSTEQSSASR). The residue at position 212 (Arg212) is an Omega-N-methylarginine. Positions 213–226 (LMRRHKRRRRKQKV) are enriched in basic residues. A PDZ domain is found at 249-321 (TVTLNMEKYN…NDDAVRVLRE (73 aa)). At Arg271 the chain carries Asymmetric dimethylarginine; by PRMT1; alternate. Symmetric dimethylarginine; by PRMT7; alternate occurs at positions 271 and 342. Arg342 carries the post-translational modification Omega-N-methylarginine; alternate. A Phosphothreonine modification is found at Thr346. Residues 422 to 496 (PESGLEVRDR…SEQCYYIFGD (75 aa)) enclose the DEP domain. The tract at residues 546 to 691 (PYNPHPGFPE…PPGRDLASVP (146 aa)) is disordered. The span at 565–581 (ASSQHSEGSRSSGSNRS) shows a compositional bias: low complexity. Basic and acidic residues-rich tracts occupy residues 582-595 (GSDR…KAGD) and 604-622 (ESDH…RAPS). Arg614 bears the Symmetric dimethylarginine; by PRMT7 mark. Residues 653-682 (YGPPGVPPLYGPPMLMMPPPPAAMGPPGAP) show a composition bias toward pro residues. Residue Ser697 is modified to Phosphoserine. Arg698 is modified (omega-N-methylarginine; alternate). Arg698 bears the Dimethylated arginine; alternate mark. Ser700 bears the Phosphoserine mark.

This sequence belongs to the DSH family. Interacts (via the PDZ domain) with the C-terminal regions of VANGL1 and VANGL2. Interacts (via the region containing both the PDZ and DEP domains) with LRRFIP2; the DIX domain may inhibit this interaction. Interacts with CYLD, CEP164 and DAB2. Interacts with DCDC2. Interacts with FOXK1 and FOXK2. Interacts with DAAM2. Ubiquitinated. Deubiquitinated by CYLD, which acts on 'Lys-63'-linked ubiquitin chains. Post-translationally, phosphorylated by CSNK1D. In terms of processing, arginine methylation may function as a switch in regulation of function in Wnt signaling.

The protein resides in the cytoplasm. Its function is as follows. Involved in the signal transduction pathway mediated by multiple Wnt genes. This Homo sapiens (Human) protein is Segment polarity protein dishevelled homolog DVL-3 (DVL3).